We begin with the raw amino-acid sequence, 874 residues long: Rho GTPase-activating protein 42 (874 aa).

The BAR domain maps to 7 to 262 (EFSDSYLDSP…MKSANQDYRP (256 aa)). Residues 225-261 (KQQLQFNLQNTRNNFESTRQEVERLMQRMKSANQDYR) are a coiled coil. The PH domain occupies 265 to 374 (QWTMEGYLYV…WLEAMDGKEP (110 aa)). Y376 carries the post-translational modification Phosphotyrosine. A Rho-GAP domain is found at 376–572 (YTLPAIISKK…ILIEHYEKIF (197 aa)). A disordered region spans residues 575 to 720 (APDPSIPLPQ…GDVSPPIDLV (146 aa)). A compositionally biased stretch (low complexity) spans 620–650 (DSYSSSPDSTPMGSIESLSSHSSEQNSTTKS). Residues 667-686 (TPSSSNGQKSLGLWTTSPES) show a composition bias toward polar residues. Phosphoserine is present on S683. Residues 687–697 (SSREDATKTDA) show a composition bias toward basic and acidic residues. Residues 700–711 (DCQSVASVTSPG) are compositionally biased toward polar residues. A phosphoserine mark is found at S740, S753, S756, and S811. The span at 749–762 (SYSGSIQSLTSVGS) shows a compositional bias: polar residues. A disordered region spans residues 749 to 777 (SYSGSIQSLTSVGSKETPKASPNPDLPPK). The SH3 domain maps to 816 to 874 (SSGRQAKAMYSCKAEHSHELSFPQGAIFSNVYPSVEPGWLKATYEGKTGLVPENYVVFL). Y870 carries the phosphotyrosine modification.

As to expression, highly and selectively expressed in smooth muscle cells.

In terms of biological role, may influence blood pressure by functioning as a GTPase-activating protein for RHOA in vascular smooth muscle. In Homo sapiens (Human), this protein is Rho GTPase-activating protein 42.